Reading from the N-terminus, the 730-residue chain is Ribosomal RNA large subunit methyltransferase K/L (730 aa).

One can recognise a THUMP domain in the interval 46 to 157; it reads TAYRLCVWSR…RGEAILSLDL (112 aa). The disordered stretch occupies residues 395–418; sequence ERREAQPEGTEVRQQAPQASEPAR.

Belongs to the methyltransferase superfamily. RlmKL family.

The protein localises to the cytoplasm. The enzyme catalyses guanosine(2445) in 23S rRNA + S-adenosyl-L-methionine = N(2)-methylguanosine(2445) in 23S rRNA + S-adenosyl-L-homocysteine + H(+). It carries out the reaction guanosine(2069) in 23S rRNA + S-adenosyl-L-methionine = N(2)-methylguanosine(2069) in 23S rRNA + S-adenosyl-L-homocysteine + H(+). Specifically methylates the guanine in position 2445 (m2G2445) and the guanine in position 2069 (m7G2069) of 23S rRNA. The sequence is that of Ribosomal RNA large subunit methyltransferase K/L from Pseudomonas putida (strain GB-1).